Here is a 146-residue protein sequence, read N- to C-terminus: Sperm surface protein Sp17 (146 aa).

Residues 76–88 (EHESEKCEAEEKS) show a composition bias toward basic and acidic residues. The tract at residues 76 to 109 (EHESEKCEAEEKSQSVTEEETPVLTIDSEDDKDK) is disordered. A compositionally biased stretch (acidic residues) spans 92 to 108 (TEEETPVLTIDSEDDKD). In terms of domain architecture, IQ spans 110–139 (EEMAALKIQAAFRGHLAREDVKKIRTNKAE).

As to quaternary structure, homodimer. May interact with ROPN1. In terms of processing, the N-terminus is blocked. In terms of tissue distribution, testis- and sperm-specific.

The protein localises to the membrane. Sperm surface zona pellucida binding protein. Helps to bind spermatozoa to the zona pellucida with high affinity. Might function in binding zona pellucida and carbohydrates. The polypeptide is Sperm surface protein Sp17 (SPA17) (Oryctolagus cuniculus (Rabbit)).